The chain runs to 363 residues: dTDP-L-rhamnose 4-epimerase (363 aa).

Residues 18 to 24, 68 to 69, and 90 to 94 contribute to the NAD(+) site; these read GGAGFIG, DV, and LAAET. The substrate site is built by serine 136 and tyrosine 191. The NAD(+) site is built by tyrosine 191 and lysine 195. Residue tyrosine 191 is the Proton acceptor of the active site. Substrate-binding residues include asparagine 220 and arginine 259.

It belongs to the NAD(P)-dependent epimerase/dehydratase family. NAD(+) is required as a cofactor.

It catalyses the reaction dTDP-6-deoxy-beta-L-talose = dTDP-beta-L-rhamnose. It functions in the pathway bacterial outer membrane biogenesis; LPS O-antigen biosynthesis. Its function is as follows. Catalyzes the interconvertion of dTDP-6-deoxy-L-talose and dTDP-L-rhamnose. The equilibrium is strongly toward dTDP-L-rhamnose. The protein is dTDP-L-rhamnose 4-epimerase (wbiB) of Burkholderia thailandensis (strain ATCC 700388 / DSM 13276 / CCUG 48851 / CIP 106301 / E264).